A 327-amino-acid chain; its full sequence is Urokinase plasminogen activator surface receptor (327 aa).

A signal peptide spans 1 to 23; the sequence is MGLPRRLLLLLLLATTCVPASQG. UPAR/Ly6 domains follow at residues 24-117, 117-212, and 213-298; these read LQCM…GRYL, LECA…PPNG, and FQCY…SPTG. Disulfide bonds link C26–C47, C29–C35, and C40–C68. N32 is a glycosylation site (N-linked (GlcNAc...) asparagine). An N-linked (GlcNAc...) asparagine glycan is attached at N75. 11 disulfide bridges follow: C94-C99, C119-C146, C122-C129, C139-C168, C174-C191, C192-C197, C215-C243, C218-C226, C236-C262, C268-C287, and C288-C293. Residues N183, N193, N221, N254, and N282 are each glycosylated (N-linked (GlcNAc...) asparagine). A lipid anchor (GPI-anchor amidated glycine) is attached at G298. The propeptide at 299-327 is removed in mature form; the sequence is GAPRPGPAQLSLIASLLLTLGLWGVLLWT.

As to quaternary structure, monomer. Interacts (via the UPAR/Ly6 domains) with SRPX2. Interacts with MRC2. Interacts with SORL1 (via N-terminal ectodomain); this interaction decreases PLAUR internalization. The ternary complex composed of PLAUR-PLAU-SERPINE1 also interacts with SORL1. Interacts with CD82; this interaction prevents PLAUR from binding to its high affinity ligand PLAU. As to expression, expressed in angiogenic endothelial cells (at protein level).

It localises to the cell membrane. It is found in the secreted. Its function is as follows. Acts as a receptor for urokinase plasminogen activator. Plays a role in localizing and promoting plasmin formation. Mediates the proteolysis-independent signal transduction activation effects of U-PA. The polypeptide is Urokinase plasminogen activator surface receptor (Plaur) (Mus musculus (Mouse)).